Reading from the N-terminus, the 775-residue chain is Protein STRUBBELIG-RECEPTOR FAMILY 1 (775 aa).

The signal sequence occupies residues 1–31; the sequence is MRSMRSGRDNNICFLGFLSFALISLPSLSLA. The Extracellular segment spans residues 32-314; the sequence is LTNPDDVAAI…GKEDSFTSKR (283 aa). LRR repeat units lie at residues 101-122, 123-146, 147-169, 171-193, 195-217, and 218-238; these read SLKAMDFSNNHIGGSIPSTLPV, SLQNLFLSGNNFTGTIPESLSSLK, SLSVMSLNNNLLSGKIPDVFQDL, LMINIDLSSNNLSGPLPPSMQNL, TLTSLLLQNNHLSGELDVLQDLP, and LKDLNVENNLFNGPIPEKLLS. N-linked (GlcNAc...) asparagine glycosylation is present at N133. N181 and N192 each carry an N-linked (GlcNAc...) asparagine glycan. N-linked (GlcNAc...) asparagine glycosylation occurs at N250. The interval 254–308 is disordered; it reads APSPSPETPPSPTSPKRPFFGPPSPNASAGHGQAHVRSPPSDHHPSRPTPQGKED. Positions 256 to 278 are enriched in pro residues; sequence SPSPETPPSPTSPKRPFFGPPSP. N279 is a glycosylation site (N-linked (GlcNAc...) asparagine). The helical transmembrane segment at 315–335 threads the bilayer; sequence IIWISILGAFSFVVLALVCLL. Residues 336-775 are Cytoplasmic-facing; that stretch reads CGRKCLRKRE…NGDNQYTGRR (440 aa). The interval 345–414 is disordered; that stretch reads EDSEQLSKPH…VGSESKQESH (70 aa). The span at 367–379 shows a compositional bias: polar residues; that stretch reads RSNASMLPPSNTF. Residues 380–391 show a composition bias toward basic and acidic residues; sequence NKDKEARPKERV. In terms of domain architecture, Protein kinase spans 478–756; the sequence is FSHENLIGTG…EVVQDLSDMI (279 aa).

This sequence belongs to the protein kinase superfamily. Ser/Thr protein kinase family. Expressed in roots, stems, leaves and flowers. Low expression in seedlings and siliques.

The protein resides in the membrane. Functionally, not essential for epidermal patterning and not redundant with STRUBBELIG. The sequence is that of Protein STRUBBELIG-RECEPTOR FAMILY 1 (SRF1) from Arabidopsis thaliana (Mouse-ear cress).